Reading from the N-terminus, the 76-residue chain is Translational regulator CsrA (76 aa).

It belongs to the CsrA/RsmA family. As to quaternary structure, homodimer; the beta-strands of each monomer intercalate to form a hydrophobic core, while the alpha-helices form wings that extend away from the core.

Its subcellular location is the cytoplasm. Its function is as follows. A translational regulator that binds mRNA to regulate translation initiation and/or mRNA stability. Usually binds in the 5'-UTR at or near the Shine-Dalgarno sequence preventing ribosome-binding, thus repressing translation. Its main target seems to be the major flagellin gene, while its function is anatagonized by FliW. The sequence is that of Translational regulator CsrA from Syntrophomonas wolfei subsp. wolfei (strain DSM 2245B / Goettingen).